The primary structure comprises 177 residues: tRNA-splicing endonuclease (177 aa).

Residues tyrosine 114, histidine 123, and lysine 154 contribute to the active site.

The protein belongs to the tRNA-intron endonuclease family. Archaeal short subfamily. As to quaternary structure, homotetramer; although the tetramer contains four active sites, only two participate in the cleavage. Therefore, it should be considered as a dimer of dimers.

The enzyme catalyses pretRNA = a 3'-half-tRNA molecule with a 5'-OH end + a 5'-half-tRNA molecule with a 2',3'-cyclic phosphate end + an intron with a 2',3'-cyclic phosphate and a 5'-hydroxyl terminus.. Functionally, endonuclease that removes tRNA introns. Cleaves pre-tRNA at the 5'- and 3'-splice sites to release the intron. The products are an intron and two tRNA half-molecules bearing 2',3' cyclic phosphate and 5'-OH termini. Recognizes a pseudosymmetric substrate in which 2 bulged loops of 3 bases are separated by a stem of 4 bp. The protein is tRNA-splicing endonuclease of Methanococcus vannielii (strain ATCC 35089 / DSM 1224 / JCM 13029 / OCM 148 / SB).